Consider the following 275-residue polypeptide: Coagulation factor IX (275 aa).

Sulfotyrosine is present on Tyr23. An N-linked (GlcNAc...) asparagine glycan is attached at Asn25. At Thr27 the chain carries Phosphothreonine. Asn35 is a glycosylation site (N-linked (GlcNAc...) asparagine). A glycan (O-linked (GalNAc...) threonine) is linked at Thr47. The region spanning Ile49–Trp275 is the Peptidase S1 domain. Cys74 and Cys90 are disulfide-bonded. His89 acts as the Charge relay system in catalysis. A glycan (N-linked (GlcNAc...) asparagine) is linked at Asn96. Ca(2+)-binding residues include Glu103, Asn105, Glu108, Glu110, and Glu113. N-linked (GlcNAc...) asparagine glycosylation occurs at Asn128. The active-site Charge relay system is the Asp137. 2 disulfides stabilise this stretch: Cys204–Cys218 and Cys229–Cys257. The active-site Charge relay system is the Ser233.

Belongs to the peptidase S1 family. In terms of assembly, heterodimer of a light chain and a heavy chain; disulfide-linked. Interacts (inactive and activated) with F11 (activated) in calcium-dependent manner. Interacts with SERPINC1. Post-translationally, activated by factor XIa, which excises the activation peptide. The propeptide can also be removed by snake venom protease. Activated by coagulation factor VIIa-tissue factor (F7-F3) complex in calcium-dependent manner.

It localises to the secreted. The enzyme catalyses Selective cleavage of Arg-|-Ile bond in factor X to form factor Xa.. In terms of biological role, factor IX is a vitamin K-dependent plasma protein that participates in the intrinsic pathway of blood coagulation by converting factor X to its active form in the presence of Ca(2+) ions, phospholipids, and factor VIIIa. The protein is Coagulation factor IX (F9) of Oryctolagus cuniculus (Rabbit).